A 69-amino-acid chain; its full sequence is uncharacterized protein (69 aa).

This is an uncharacterized protein from Bacillus anthracis.